Reading from the N-terminus, the 793-residue chain is Calcium permeable stress-gated cation channel 1 (793 aa).

Topologically, residues 1 to 21 (MAFNGYGIFDSDPRKNPSSDL) are lumenal. The chain crosses the membrane as a helical span at residues 22-42 (RTQFWLAFLLGASACVFFCFF). Topologically, residues 43–95 (RKRWKVLYAPRTTIEGLNLPTLSSSYYKWLMDLVNIPDDVVQNCAGLDGYVFL) are cytoplasmic. Residues 96-116 (LFFKMGIKFLSFASLLGVLII) traverse the membrane as a helical segment. The Lumenal segment spans residues 117 to 192 (MPVNKHFRGD…IPGLPQPGDG (76 aa)). The helical transmembrane segment at 193-213 (FLYLYVLFTYFISIFLLYVLF) threads the bilayer. Residues 214–444 (SSTKSIADIR…HKFFQGWFIT (231 aa)) are Cytoplasmic-facing. The helical transmembrane segment at 445–465 (LVTFMIILLWTVPVGAIAVFI) threads the bilayer. Topologically, residues 466–493 (NLDTIRRLWPELGRMIEDLPFLNSLLRT) are lumenal. Residues 494 to 514 (FLPTLVYSLFISISPFLFRWL) traverse the membrane as a helical segment. Residues 515-534 (SSMQGLSSRAEEEIYAVGKN) lie on the Cytoplasmic side of the membrane. A helical membrane pass occupies residues 535 to 555 (YAYLFVNFFLVYVIAGSTSIW). The Lumenal segment spans residues 556–577 (ELAKDTTSFAHFLANRLPHQAQ). Residues 578–598 (FFIDLIVLQGIGMFPLKLIQL) traverse the membrane as a helical segment. Topologically, residues 599–646 (GKLSSYFVRRSFVPYSIASKKFETPDSFSVGIFLPQPMFIMLICLCYS) are cytoplasmic. Residues 647–667 (IISPLILVFGLIYFIIGFLVY) traverse the membrane as a helical segment. The Lumenal segment spans residues 668 to 687 (KYELIYQMEHPQHSTGELWS). Residues 688–708 (TIFLRMIFGCVIMQLTMMGLM) form a helical membrane-spanning segment. Over 709 to 713 (SLRKA) the chain is Cytoplasmic. A helical transmembrane segment spans residues 714 to 734 (YWLSTVIFPLLCFTVISAYNF). The Lumenal portion of the chain corresponds to 735–793 (STMIRSSMQFVSLYYIRTHQSNTLSSESESRNSESSGSYVHPGFDLSNEELPLIDLNTA). Residues 759 to 778 (SSESESRNSESSGSYVHPGF) form a disordered region.

This sequence belongs to the CSC1 (TC 1.A.17) family.

The protein localises to the vacuole membrane. Functionally, acts as an osmosensitive calcium-permeable cation channel. In Schizosaccharomyces pombe (strain 972 / ATCC 24843) (Fission yeast), this protein is Calcium permeable stress-gated cation channel 1.